We begin with the raw amino-acid sequence, 301 residues long: GTPase Era (301 aa).

An Era-type G domain is found at 7 to 175; it reads YCGFIAIVGR…ASIVRKHLPE (169 aa). The tract at residues 15–22 is G1; sequence GRPNVGKS. 15-22 provides a ligand contact to GTP; the sequence is GRPNVGKS. The tract at residues 41–45 is G2; sequence QTTRH. The interval 62 to 65 is G3; it reads DTPG. Residues 62–66 and 124–127 each bind GTP; these read DTPGL and NKVD. The tract at residues 124–127 is G4; that stretch reads NKVD. Positions 154-156 are G5; it reads ISA. Residues 206–283 enclose the KH type-2 domain; the sequence is LGAELPYSVT…HLELWVKVKS (78 aa).

This sequence belongs to the TRAFAC class TrmE-Era-EngA-EngB-Septin-like GTPase superfamily. Era GTPase family. As to quaternary structure, monomer.

Its subcellular location is the cytoplasm. It is found in the cell inner membrane. In terms of biological role, an essential GTPase that binds both GDP and GTP, with rapid nucleotide exchange. Plays a role in 16S rRNA processing and 30S ribosomal subunit biogenesis and possibly also in cell cycle regulation and energy metabolism. The chain is GTPase Era from Salmonella arizonae (strain ATCC BAA-731 / CDC346-86 / RSK2980).